A 633-amino-acid polypeptide reads, in one-letter code: Breast carcinoma-amplified sequence 1 homolog (633 aa).

Disordered stretches follow at residues 1 to 34 (MGNQ…CVQN) and 57 to 422 (SSKD…KLFW). Polar residues-rich tracts occupy residues 24–34 (KVTSDNECVQN) and 57–68 (SSKDNVATSSPK). Ser-127 is subject to Phosphoserine. Positions 278–288 (VDTTENSSSIM) are enriched in polar residues. Residues 300 to 318 (TETKKDPEDTKATKADSVC) show a composition bias toward basic and acidic residues. Position 328 is a phosphoserine (Ser-328). Thr-330 carries the phosphothreonine modification. Over residues 359–378 (NSPTTSANLKSDKANFTPQE) the composition is skewed to polar residues. Residue Ser-360 is modified to Phosphoserine. Over residues 400–410 (SEGRDSGKEKA) the composition is skewed to basic and acidic residues. 2 positions are modified to phosphoserine: Ser-425 and Ser-443. Positions 454-633 (ESSLQTVDLS…VSIGPVGKSK (180 aa)) are disordered. Over residues 471–481 (TDVKVKEESKP) the composition is skewed to basic and acidic residues. The segment covering 510-522 (KDSSCQTSNSVEK) has biased composition (polar residues). Thr-523 carries the phosphothreonine modification. Phosphoserine is present on Ser-525. Basic and acidic residues predominate over residues 537–555 (KNKETSSSKDKKSVDKKSA). Phosphoserine is present on residues Ser-601 and Ser-615. Residues 614-633 (MSDAQVQTDPVSIGPVGKSK) are interacts with DYNLL1 AND DYNLL2.

As to quaternary structure, homodimer. Interacts with DYNLL1 and DYNLL2. As to expression, highly expressed in the brain and, more specifically, in oligodendrocytes. Expressed in the Schwann cells (at protein level).

It localises to the cytoplasm. Its function is as follows. Required for myelination. The polypeptide is Breast carcinoma-amplified sequence 1 homolog (Bcas1) (Mus musculus (Mouse)).